Here is a 157-residue protein sequence, read N- to C-terminus: SsrA-binding protein (157 aa).

The disordered stretch occupies residues 135-157 (KRDTIKDREGKREVERAMKTNHR).

This sequence belongs to the SmpB family.

The protein localises to the cytoplasm. Its function is as follows. Required for rescue of stalled ribosomes mediated by trans-translation. Binds to transfer-messenger RNA (tmRNA), required for stable association of tmRNA with ribosomes. tmRNA and SmpB together mimic tRNA shape, replacing the anticodon stem-loop with SmpB. tmRNA is encoded by the ssrA gene; the 2 termini fold to resemble tRNA(Ala) and it encodes a 'tag peptide', a short internal open reading frame. During trans-translation Ala-aminoacylated tmRNA acts like a tRNA, entering the A-site of stalled ribosomes, displacing the stalled mRNA. The ribosome then switches to translate the ORF on the tmRNA; the nascent peptide is terminated with the 'tag peptide' encoded by the tmRNA and targeted for degradation. The ribosome is freed to recommence translation, which seems to be the essential function of trans-translation. This chain is SsrA-binding protein, found in Albidiferax ferrireducens (strain ATCC BAA-621 / DSM 15236 / T118) (Rhodoferax ferrireducens).